A 452-amino-acid chain; its full sequence is Pup--protein ligase (452 aa).

E9 serves as a coordination point for Mg(2+). R53 is a binding site for ATP. A Mg(2+)-binding site is contributed by Y55. Residue D57 is the Proton acceptor of the active site. Position 63 (E63) interacts with Mg(2+). ATP-binding residues include T66 and W419.

Belongs to the Pup ligase/Pup deamidase family. Pup-conjugating enzyme subfamily.

The enzyme catalyses ATP + [prokaryotic ubiquitin-like protein]-L-glutamate + [protein]-L-lysine = ADP + phosphate + N(6)-([prokaryotic ubiquitin-like protein]-gamma-L-glutamyl)-[protein]-L-lysine.. The protein operates within protein degradation; proteasomal Pup-dependent pathway. It functions in the pathway protein modification; protein pupylation. Its function is as follows. Catalyzes the covalent attachment of the prokaryotic ubiquitin-like protein modifier Pup to the proteasomal substrate proteins, thereby targeting them for proteasomal degradation. This tagging system is termed pupylation. The ligation reaction involves the side-chain carboxylate of the C-terminal glutamate of Pup and the side-chain amino group of a substrate lysine. The sequence is that of Pup--protein ligase from Streptosporangium roseum (strain ATCC 12428 / DSM 43021 / JCM 3005 / KCTC 9067 / NCIMB 10171 / NRRL 2505 / NI 9100).